The chain runs to 778 residues: MNKKILETLEFDKVKALFEPHLLTEQGLEQLRQLAPTAKADKIKQAFAEMKEMQALFVEQPHFTILSTKEIAGVCKRLEMGADLNIEEFLLLKRVLLTSRELQSFYANLENVSLEELAFWFEKLHDFPQLQGNLQAFNDAGFIENFASEELARIRRKIHDSESQVRDVLQDLLKQKAQMLTEGIVASRNGRQVLPVKNTYRNKIAGVVHDISASGNTVYIEPREVVKLSEEIASLRADERYEMLRILQEISERVRPHAAEIANDAWIIGHLDLIRAKVRFIQERQAVVPQLSENQEIQLLHVCHPLVKNAVANDVYFGQDLTAIVITGPNTGGKTIMLKTLGLTQVMAQSGLPILADKGSRVGIFEEIFADIGDEQSIEQSLSTFSSHMTNIVDILGKVNQHSLLLLDELGAGTDPQEGAALAMAILEDLRLRQIKTMATTHYPELKAYGIETAFVQNASMEFDTATLRPTYRFMQGVPGRSNAFEIAKRLGLSEVIVGDASQQIDQDNDVNRIIEQLEEQTLESRKRLDNIREVEQENLKMNRALKKLYNELNREKETELNKAREQAAEIVDMALSESDQILKNLHSKSQLKPHEIIEAKAKLKKLAPEKVDLSKNKVLQKAKKKRAPKVGDDIVVLSYGQRGTLTSQLKDGRWEAQVGLIKMTLEEKEFDLVQAQQEKAVKKKQVNVVKRTSGRGPQARLDLRGKRYEEAMNELDTFIDQALLNNMAQVDIIHGIGTGVIREGVTKYLQRNKHVKSFGYAPQNAGGSGATIVTFKG.

328–335 (GPNTGGKT) is a binding site for ATP. Residues 702–777 (LDLRGKRYEE…GSGATIVTFK (76 aa)) enclose the Smr domain.

This sequence belongs to the DNA mismatch repair MutS family. MutS2 subfamily. In terms of assembly, homodimer. Binds to stalled ribosomes, contacting rRNA.

Endonuclease that is involved in the suppression of homologous recombination and thus may have a key role in the control of bacterial genetic diversity. Functionally, acts as a ribosome collision sensor, splitting the ribosome into its 2 subunits. Detects stalled/collided 70S ribosomes which it binds and splits by an ATP-hydrolysis driven conformational change. Acts upstream of the ribosome quality control system (RQC), a ribosome-associated complex that mediates the extraction of incompletely synthesized nascent chains from stalled ribosomes and their subsequent degradation. Probably generates substrates for RQC. The sequence is that of Endonuclease MutS2 from Streptococcus pneumoniae (strain Hungary19A-6).